The chain runs to 263 residues: Cell division coordinator CpoB (263 aa).

The N-terminal stretch at 1–26 (MSSNFRHQLLSLSLLVGIAAPWAAFA) is a signal peptide. A coiled-coil region spans residues 44 to 88 (QLERISNAHSQLLTQLQQQLSDNQSDIDSLRGQIQENQYQLNQVV). A compositionally biased stretch (low complexity) spans 106-123 (AAAQSTSGDQSGAAASTT). Positions 106-139 (AAAQSTSGDQSGAAASTTPTADAGTANAGAPVKS) are disordered. 3 TPR repeats span residues 143-176 (NTDY…YPDS), 180-213 (PNAN…YPKS), and 217-250 (ADAM…YPGT).

The protein belongs to the CpoB family. Homotrimer. Interacts directly with the central domain of TolA and with PBP1B. Binding to TolA disrupts the homotrimer to form a YbgF/TolA heterodimer with weak affinity. Forms a quaternary complex with PBP1B-LpoB and TolA.

The protein localises to the periplasm. Its function is as follows. Mediates coordination of peptidoglycan synthesis and outer membrane constriction during cell division. Promotes physical and functional coordination of the PBP1B-LpoB and Tol machines, and regulates PBP1B activity in response to Tol energy state. The chain is Cell division coordinator CpoB from Escherichia coli (strain K12).